The chain runs to 258 residues: Insulin-like growth factor-binding protein 4 (258 aa).

The N-terminal stretch at M1–G21 is a signal peptide. The IGFBP N-terminal domain occupies E23–L103. 6 disulfide bridges follow: C27–C53, C30–C55, C38–C56, C44–C59, C67–C80, and C74–C100. An N-linked (GlcNAc...) asparagine glycan is attached at N125. 4 disulfide bridges follow: C131–C138, C174–C204, C215–C226, and C228–C249. The Thyroglobulin type-1 domain occupies Q171 to C249. At S255 the chain carries Phosphoserine.

As to quaternary structure, binds IGF2 more than IGF1.

The protein localises to the secreted. Its function is as follows. IGF-binding proteins prolong the half-life of the IGFs and have been shown to either inhibit or stimulate the growth promoting effects of the IGFs on cell culture. They alter the interaction of IGFs with their cell surface receptors. The sequence is that of Insulin-like growth factor-binding protein 4 (IGFBP4) from Bos taurus (Bovine).